Reading from the N-terminus, the 290-residue chain is Arylamine N-acetyltransferase 1 (290 aa).

Residue Met1 is modified to N-acetylmethionine. The active-site Acyl-thioester intermediate is Cys68. Position 103 (Ser103) interacts with CoA. A substrate-binding site is contributed by Val106 to His107. Catalysis depends on residues His107 and Asp122. Tyr208 serves as a coordination point for CoA.

This sequence belongs to the arylamine N-acetyltransferase family.

The protein localises to the cytoplasm. It catalyses the reaction an arylamine + acetyl-CoA = an N-acetylarylamine + CoA. Functionally, participates in the detoxification of a plethora of hydrazine and arylamine drugs. Acetylates both arylamines and arylalkylamines. The protein is Arylamine N-acetyltransferase 1 (Nat1) of Rattus norvegicus (Rat).